Reading from the N-terminus, the 288-residue chain is MCPCPHSQAQGETDGEAEWHNAALDFTHAMSYGDYLKLDKVLDAQFPLSPDHNEMLFIIQHQTSELWMKLMLHELRAAREHVKSGKLGPALKMLARVSRIFDQLVHAWAVLATMTPTEYNTIRPYLGQSSGFQSYQYREIEFILGNKNATLLKPHAHRAELLAALEQALHTPSLYDEAIRLMAAQGLPVSQERLARDAAAGTCYEASVEAAWRQVYQAPERYWDLYQLAEKLIDLEDSFRQWRFRHVTTVERIIGFKPGTGGTEGVGYLRSMLDTILFPELWRLRSNL.

Substrate-binding positions include 57–61, Tyr-119, and Arg-123; that span reads FIIQH. Residue His-246 participates in heme binding. Thr-260 is a substrate binding site.

The protein belongs to the tryptophan 2,3-dioxygenase family. As to quaternary structure, homotetramer. It depends on heme as a cofactor.

The enzyme catalyses L-tryptophan + O2 = N-formyl-L-kynurenine. The protein operates within amino-acid degradation; L-tryptophan degradation via kynurenine pathway; L-kynurenine from L-tryptophan: step 1/2. In terms of biological role, heme-dependent dioxygenase that catalyzes the oxidative cleavage of the L-tryptophan (L-Trp) pyrrole ring and converts L-tryptophan to N-formyl-L-kynurenine. Catalyzes the oxidative cleavage of the indole moiety. The polypeptide is Tryptophan 2,3-dioxygenase (Pseudomonas aeruginosa (strain ATCC 15692 / DSM 22644 / CIP 104116 / JCM 14847 / LMG 12228 / 1C / PRS 101 / PAO1)).